We begin with the raw amino-acid sequence, 227 residues long: Glutathione S-transferase U27 (227 aa).

The region spanning 4–84 (EEVVVLNFWP…YIDEVWKDDK (81 aa)) is the GST N-terminal domain. Residues 14–15 (SM), 41–42 (QK), 55–56 (KI), and 68–69 (ES) each bind glutathione. The GST C-terminal domain occupies 92 to 217 (DPYQKSQCRF…LKIFDRVTQI (126 aa)).

It belongs to the GST superfamily. Tau family.

The protein resides in the cytoplasm. It localises to the cytosol. The catalysed reaction is RX + glutathione = an S-substituted glutathione + a halide anion + H(+). Functionally, may be involved in the conjugation of reduced glutathione to a wide number of exogenous and endogenous hydrophobic electrophiles and have a detoxification role against certain herbicides. The polypeptide is Glutathione S-transferase U27 (GSTU27) (Arabidopsis thaliana (Mouse-ear cress)).